A 119-amino-acid polypeptide reads, in one-letter code: Large ribosomal subunit protein uL24 (119 aa).

Belongs to the universal ribosomal protein uL24 family. Part of the 50S ribosomal subunit.

Its function is as follows. One of two assembly initiator proteins, it binds directly to the 5'-end of the 23S rRNA, where it nucleates assembly of the 50S subunit. In terms of biological role, located at the polypeptide exit tunnel on the outside of the subunit. The protein is Large ribosomal subunit protein uL24 of Methanococcus maripaludis (strain C5 / ATCC BAA-1333).